A 156-amino-acid chain; its full sequence is Small ribosomal subunit protein uS7 (156 aa).

This sequence belongs to the universal ribosomal protein uS7 family. Part of the 30S ribosomal subunit. Contacts proteins S9 and S11.

Its function is as follows. One of the primary rRNA binding proteins, it binds directly to 16S rRNA where it nucleates assembly of the head domain of the 30S subunit. Is located at the subunit interface close to the decoding center, probably blocks exit of the E-site tRNA. This is Small ribosomal subunit protein uS7 from Lactobacillus helveticus (strain DPC 4571).